Here is a 337-residue protein sequence, read N- to C-terminus: DNA-directed RNA polymerase subunit alpha (337 aa).

The interval M1–E233 is alpha N-terminal domain (alpha-NTD). The segment at F249 to Y337 is alpha C-terminal domain (alpha-CTD).

This sequence belongs to the RNA polymerase alpha chain family. As to quaternary structure, homodimer. The RNAP catalytic core consists of 2 alpha, 1 beta, 1 beta' and 1 omega subunit. When a sigma factor is associated with the core the holoenzyme is formed, which can initiate transcription.

It carries out the reaction RNA(n) + a ribonucleoside 5'-triphosphate = RNA(n+1) + diphosphate. DNA-dependent RNA polymerase catalyzes the transcription of DNA into RNA using the four ribonucleoside triphosphates as substrates. The protein is DNA-directed RNA polymerase subunit alpha of Bartonella quintana (strain Toulouse) (Rochalimaea quintana).